We begin with the raw amino-acid sequence, 126 residues long: Small ribosomal subunit protein bS16 (126 aa).

Residues 87–126 (ARSNPEKALPGKRALERVAEKKQKAEDAAAAAAAEASAAE) form a disordered region. A compositionally biased stretch (basic and acidic residues) spans 99 to 113 (RALERVAEKKQKAED). Residues 114-126 (AAAAAAAEASAAE) show a composition bias toward low complexity.

The protein belongs to the bacterial ribosomal protein bS16 family.

In Agrobacterium fabrum (strain C58 / ATCC 33970) (Agrobacterium tumefaciens (strain C58)), this protein is Small ribosomal subunit protein bS16.